The following is a 98-amino-acid chain: Protein translation factor SUI1 homolog (98 aa).

The protein belongs to the SUI1 family.

This is Protein translation factor SUI1 homolog from Thermococcus kodakarensis (strain ATCC BAA-918 / JCM 12380 / KOD1) (Pyrococcus kodakaraensis (strain KOD1)).